The primary structure comprises 392 residues: Protein O-glucosyltransferase 1 (392 aa).

Positions 1-23 (MERRAGSRLRAWMLLLLLCPVQG) are cleaved as a signal peptide. 4 disulfides stabilise this stretch: cysteine 49/cysteine 56, cysteine 54/cysteine 357, cysteine 102/cysteine 108, and cysteine 263/cysteine 286. The N-linked (GlcNAc...) asparagine glycan is linked to asparagine 53. The interaction with the consensus sequence C-X-S-X-[PA]-C in peptide substrates stretch occupies residues 103 to 107 (MFPSR). Aspartate 133 (proton donor/acceptor) is an active-site residue. The interval 172 to 178 (AVWPLYP) is interaction with the consensus sequence C-X-S-X-[PA]-C in peptide substrates. Position 177 (tyrosine 177) interacts with UDP-alpha-D-glucose. The N-linked (GlcNAc...) asparagine glycan is linked to asparagine 204. Residues serine 212, arginine 218, and 274–279 (VAASFR) contribute to the UDP-alpha-D-glucose site. Residue asparagine 373 is glycosylated (N-linked (GlcNAc...) asparagine). Positions 389–392 (KTEL) match the Prevents secretion from ER motif.

Belongs to the glycosyltransferase 90 family. Widely expressed in newborn and adult tissues (at protein level).

It is found in the endoplasmic reticulum lumen. It catalyses the reaction L-seryl-[EGF-like domain protein] + UDP-alpha-D-xylose = 3-O-(beta-D-xylosyl)-L-seryl-[EGF-like domain protein] + UDP + H(+). The enzyme catalyses L-seryl-[EGF-like domain protein] + UDP-alpha-D-glucose = 3-O-(beta-D-glucosyl)-L-seryl-[EGF-like domain protein] + UDP + H(+). The protein operates within protein modification; protein glycosylation. Functionally, dual specificity glycosyltransferase that catalyzes the transfer of glucose and xylose from UDP-glucose and UDP-xylose, respectively, to a serine residue found in the consensus sequence of C-X-S-X-P-C. Specifically targets extracellular EGF repeats of protein such as CRB2, F7, F9 and NOTCH2. Acts as a positive regulator of Notch signaling by mediating O-glucosylation of Notch, leading to regulate muscle development. Notch glucosylation does not affect Notch ligand binding. Required during early development to promote gastrulation: acts by mediating O-glucosylation of CRB2, which is required for CRB2 localization to the cell membrane. In Mus musculus (Mouse), this protein is Protein O-glucosyltransferase 1.